A 331-amino-acid chain; its full sequence is Adenosine deaminase (331 aa).

The Zn(2+) site is built by histidine 12 and histidine 14. Positions 14, 16, and 170 each coordinate substrate. Histidine 197 contributes to the Zn(2+) binding site. Glutamate 200 functions as the Proton donor in the catalytic mechanism. Aspartate 278 lines the Zn(2+) pocket. Aspartate 279 provides a ligand contact to substrate.

It belongs to the metallo-dependent hydrolases superfamily. Adenosine and AMP deaminases family. Adenosine deaminase subfamily. Zn(2+) is required as a cofactor.

The enzyme catalyses adenosine + H2O + H(+) = inosine + NH4(+). It carries out the reaction 2'-deoxyadenosine + H2O + H(+) = 2'-deoxyinosine + NH4(+). Functionally, catalyzes the hydrolytic deamination of adenosine and 2-deoxyadenosine. This is Adenosine deaminase from Shewanella baltica (strain OS185).